The primary structure comprises 448 residues: Protein kinase C and casein kinase substrate in neurons protein 2 (448 aa).

Residues 11 to 282 enclose the F-BAR domain; the sequence is VEVSSDSFWE…NIKTADAVED (272 aa). Residues 25 to 274 are a coiled coil; it reads KRTVKRIDDG…NIYRELEQNI (250 aa). The interval 315–386 is disordered; the sequence is SRREKKKASD…DTNPFDEDTS (72 aa). Residues 329-358 are compositionally biased toward polar residues; it reads TGINQTGDQVSQPNKHSSVSSYEKNQSYPT. The NPF1 motif lies at 367 to 369; that stretch reads NPF. The NPF2 signature appears at 379-381; it reads NPF. The 61-residue stretch at 388 to 448 folds into the SH3 domain; it reads VMEVRVRALY…YPANYVEPIQ (61 aa).

The protein belongs to the PACSIN family. In terms of processing, phosphorylated on serine residues. Detected in intestine, cardiac muscle, lung and brain (at protein level). Expressed in all tissues tested, including, gizzard, liver, cardiac muscle, skeletal muscle and skin.

The protein localises to the cytoplasm. Its subcellular location is the cytoskeleton. It localises to the cytoplasmic vesicle membrane. The protein resides in the cell projection. It is found in the ruffle membrane. The protein localises to the early endosome. Its subcellular location is the recycling endosome membrane. It localises to the cell membrane. The protein resides in the membrane. It is found in the caveola. The protein localises to the cell junction. Its subcellular location is the focal adhesion. Its function is as follows. Regulates the morphogenesis and endocytosis of caveolae. Lipid-binding protein that is able to promote the tubulation of the phosphatidic acid-containing membranes it preferentially binds. Plays a role in intracellular vesicle-mediated transport. Involved in the endocytosis of cell-surface receptors like the EGF receptor, contributing to its internalization in the absence of EGF stimulus. Essential for endothelial organization in sprouting angiogenesis, modulates CDH5-based junctions. Facilitates endothelial front-rear polarity during migration by recruiting EHD4 and MICALL1 to asymmetric adherens junctions between leader and follower cells. In Gallus gallus (Chicken), this protein is Protein kinase C and casein kinase substrate in neurons protein 2 (PACSIN2).